The chain runs to 227 residues: Ribosomal RNA large subunit methyltransferase E (227 aa).

Residues G78, W80, D103, D119, and D143 each coordinate S-adenosyl-L-methionine. The active-site Proton acceptor is K183.

It belongs to the class I-like SAM-binding methyltransferase superfamily. RNA methyltransferase RlmE family.

It is found in the cytoplasm. The catalysed reaction is uridine(2552) in 23S rRNA + S-adenosyl-L-methionine = 2'-O-methyluridine(2552) in 23S rRNA + S-adenosyl-L-homocysteine + H(+). Specifically methylates the uridine in position 2552 of 23S rRNA at the 2'-O position of the ribose in the fully assembled 50S ribosomal subunit. In Rickettsia peacockii (strain Rustic), this protein is Ribosomal RNA large subunit methyltransferase E.